A 497-amino-acid chain; its full sequence is Ammonium transporter Rh type C (497 aa).

The Cytoplasmic segment spans residues 1–9 (MAWNTNLRG). The helical transmembrane segment at 10-30 (RLPITCLILQVTMVVLFGVFV) threads the bilayer. The Extracellular segment spans residues 31–61 (RYDIQADAHWWLEKKRKNISSDVENEFYYRY). N48 is a glycosylation site (N-linked (GlcNAc...) asparagine). The chain crosses the membrane as a helical span at residues 62-82 (PSFEDVHAMVFVGFGFLMTYL). The Cytoplasmic segment spans residues 83 to 93 (QRYGFSAVGFN). Residues 94-114 (FLLAAFGIQWALLMQGWFHFF) traverse the membrane as a helical segment. The Extracellular segment spans residues 115–125 (EEGHILLSVEN). The chain crosses the membrane as a helical span at residues 126-145 (LIQADFCVASTCVAFGAVLG). The Cytoplasmic portion of the chain corresponds to 146–151 (KISPMQ). A helical membrane pass occupies residues 152–174 (LLIMTFFQVTLFTVNEFILLNLI). The Extracellular portion of the chain corresponds to 175–179 (EAKDA). The helical transmembrane segment at 180-200 (GGSMTIHTFGAYFGLTVTWIL) threads the bilayer. The Cytoplasmic portion of the chain corresponds to 201-219 (YRKNLEQSKQRQSSVYHSD). Residues 220 to 240 (LFAMIGTLFLWIYWPSFNSAS) form a helical membrane-spanning segment. Topologically, residues 241–251 (SFHGDTQHRAA) are extracellular. A helical transmembrane segment spans residues 252-272 (LNTYLSLAASVLTTVAVSSVI). At 273–282 (HKKGKLDMVH) the chain is on the cytoplasmic side. Residues 283–303 (IQNATLAGGVGVGTAAEMMLT) form a helical membrane-spanning segment. P304 is a topological domain (extracellular). The helical transmembrane segment at 305-325 (YGALIVGFFCGILSTLGFAYL) threads the bilayer. Residues 326 to 340 (SPFLESRLRIQDTCG) lie on the Cytoplasmic side of the membrane. Residues 341-361 (IHNLHGIPGIIGGIVGAVTAA) traverse the membrane as a helical segment. Residues 362–395 (YSSPDVYGEPGIVHSFGFGGYKADWTKRMQGRSQ) lie on the Extracellular side of the membrane. Residues 396–416 (IFGLLLSLAMALVGGIIVGFI) form a helical membrane-spanning segment. Residues 417–497 (LKLPFWGQAS…ATVTSSSLVH (81 aa)) are Cytoplasmic-facing.

This sequence belongs to the ammonium transporter (TC 2.A.49) family. Rh subfamily. In terms of assembly, homotrimer. Post-translationally, N-glycosylated. Expressed by connecting tubule cells and intercalated cells of the collecting duct in kidney (at protein level).

It localises to the cell membrane. It is found in the apical cell membrane. The enzyme catalyses NH4(+)(in) = NH4(+)(out). It carries out the reaction methylamine(out) = methylamine(in). It catalyses the reaction CO2(out) = CO2(in). Its function is as follows. Ammonium transporter involved in the maintenance of acid-base homeostasis. Transports ammonium and its related derivative methylammonium across the plasma membrane of epithelial cells likely contributing to renal transepithelial ammonia transport and ammonia metabolism. Postulated to primarily mediate an electroneutral bidirectional transport of NH3 ammonia species according to a mechanism that implies interaction of an NH4(+) ion with acidic residues of the pore entry followed by dissociation of NH4(+) into NH3 and H(+). As a result NH3 transits through the central pore and is protonated on the extracellular side reforming NH4(+). May act as a CO2 channel providing for renal acid secretion. The sequence is that of Ammonium transporter Rh type C (Rhcg) from Rattus norvegicus (Rat).